The following is a 498-amino-acid chain: ATP synthase subunit beta, chloroplastic (498 aa).

Residue 172–179 participates in ATP binding; sequence GGAGVGKT.

This sequence belongs to the ATPase alpha/beta chains family. In terms of assembly, F-type ATPases have 2 components, CF(1) - the catalytic core - and CF(0) - the membrane proton channel. CF(1) has five subunits: alpha(3), beta(3), gamma(1), delta(1), epsilon(1). CF(0) has four main subunits: a(1), b(1), b'(1) and c(9-12).

It is found in the plastid. It localises to the chloroplast thylakoid membrane. The enzyme catalyses ATP + H2O + 4 H(+)(in) = ADP + phosphate + 5 H(+)(out). In terms of biological role, produces ATP from ADP in the presence of a proton gradient across the membrane. The catalytic sites are hosted primarily by the beta subunits. This Solanum lycopersicum (Tomato) protein is ATP synthase subunit beta, chloroplastic.